Here is a 147-residue protein sequence, read N- to C-terminus: D(1B) dopamine receptor (147 aa).

The helical transmembrane segment at 1-12 (SILISFPVQLNW) threads the bilayer. At 13–55 (HRDQAGSWGGLDLTNNLANWTPWEEDVWEPDVRAENCDSSLNR) the chain is on the extracellular side. Asparagine 54 is a glycosylation site (N-linked (GlcNAc...) asparagine). Residues 56–78 (TYAISSSLVSFYIPVAIMIVTYT) form a helical membrane-spanning segment. Topologically, residues 79–128 (RIYRIAQVQIRRISSLERAAEHAQSCRSSAACAPDTSLRASIKKETKVLK) are cytoplasmic. Residues 129-147 (TLSVIMGVFVCCWLPFFIL) traverse the membrane as a helical segment.

It belongs to the G-protein coupled receptor 1 family.

It localises to the cell membrane. Dopamine receptor whose activity is mediated by G proteins which activate adenylyl cyclase. The chain is D(1B) dopamine receptor (DRD5) from Macaca mulatta (Rhesus macaque).